Reading from the N-terminus, the 552-residue chain is Putative transport protein Spro_0050 (552 aa).

The next 6 helical transmembrane spans lie at 4 to 24, 26 to 46, 65 to 85, 96 to 116, 117 to 137, and 158 to 178; these read IALTVSMLALVAVLGLWMGNW, IYGVGLGIGGVLFGGIIVGHF, FGLILFVYTIGIQVGPGFFSS, FAILLVLVGGLVAAVVHKLFA, VPLPIILGVFSGAVTNTPALG, and MGYAMAYPFGICGILLVMWLI. RCK C-terminal domains are found at residues 192–276 and 279–361; these read AFAS…VIGE and DVSL…IVGN. Transmembrane regions (helical) follow at residues 371 to 391, 393 to 413, 439 to 459, 464 to 484, 493 to 513, and 530 to 550; these read MLPVFIGIGLGVLLGSIPLFI, GFPAALRLGLAGGPLVAALIL, IVLFLAVVGLKSGGNFVDTLI, LAWIGYGALITAIPLFSVGVL, YLTLSGMLAGSMTDPPALAFA, and VYPLAMFLRIMSPQLLAVLFW.

The protein belongs to the AAE transporter (TC 2.A.81) family. YidE subfamily.

Its subcellular location is the cell membrane. The protein is Putative transport protein Spro_0050 of Serratia proteamaculans (strain 568).